We begin with the raw amino-acid sequence, 476 residues long: Tubulointerstitial nephritis antigen (476 aa).

N-linked (GlcNAc...) asparagine glycosylation is present at N38. An SMB domain is found at 59–107; the sequence is RFGCCADRDDGCVTQFYEADALCYCDKFCERENSDCCPDYKSFCREEKG. 2 cysteine pairs are disulfide-bonded: C63–C83 and C87–C94. N-linked (GlcNAc...) asparagine glycans are attached at residues N175, N314, N360, and N455.

It belongs to the peptidase C1 family.

The protein localises to the secreted. Its subcellular location is the extracellular space. It localises to the extracellular matrix. The protein resides in the basement membrane. Its function is as follows. Mediates adhesion of proximal tubule epithelial cells via integrins alpha3-beta1 and alphaV-beta3. This is a non catalytic peptidase C1 family protein. This chain is Tubulointerstitial nephritis antigen (TINAG), found in Bos taurus (Bovine).